Reading from the N-terminus, the 297-residue chain is N-acetylneuraminate lyase (297 aa).

Aceneuramate-binding residues include Ser47 and Thr48. The active-site Proton donor is the Tyr137. Catalysis depends on Lys165, which acts as the Schiff-base intermediate with substrate. Residues Thr167, Gly189, Asp191, Glu192, and Ser208 each contribute to the aceneuramate site.

Belongs to the DapA family. NanA subfamily. In terms of assembly, homotetramer.

It is found in the cytoplasm. The catalysed reaction is aceneuramate = aldehydo-N-acetyl-D-mannosamine + pyruvate. It functions in the pathway amino-sugar metabolism; N-acetylneuraminate degradation; D-fructose 6-phosphate from N-acetylneuraminate: step 1/5. Its function is as follows. Catalyzes the reversible aldol cleavage of N-acetylneuraminic acid (sialic acid; Neu5Ac) to form pyruvate and N-acetylmannosamine (ManNAc) via a Schiff base intermediate. The chain is N-acetylneuraminate lyase from Enterobacter sp. (strain 638).